We begin with the raw amino-acid sequence, 279 residues long: Formamidopyrimidine-DNA glycosylase (279 aa).

The active-site Schiff-base intermediate with DNA is the Pro2. Catalysis depends on Glu3, which acts as the Proton donor. Lys58 serves as the catalytic Proton donor; for beta-elimination activity. Positions 92, 111, and 153 each coordinate DNA. The segment at 238-272 (TVYGKEGQSCLSCSSTIIKTKHSGRSTFYCKTCQY) adopts an FPG-type zinc-finger fold. Arg262 serves as the catalytic Proton donor; for delta-elimination activity.

This sequence belongs to the FPG family. As to quaternary structure, monomer. Zn(2+) serves as cofactor.

The enzyme catalyses Hydrolysis of DNA containing ring-opened 7-methylguanine residues, releasing 2,6-diamino-4-hydroxy-5-(N-methyl)formamidopyrimidine.. It catalyses the reaction 2'-deoxyribonucleotide-(2'-deoxyribose 5'-phosphate)-2'-deoxyribonucleotide-DNA = a 3'-end 2'-deoxyribonucleotide-(2,3-dehydro-2,3-deoxyribose 5'-phosphate)-DNA + a 5'-end 5'-phospho-2'-deoxyribonucleoside-DNA + H(+). Involved in base excision repair of DNA damaged by oxidation or by mutagenic agents. Acts as a DNA glycosylase that recognizes and removes damaged bases. Has a preference for oxidized purines, such as 7,8-dihydro-8-oxoguanine (8-oxoG). Has AP (apurinic/apyrimidinic) lyase activity and introduces nicks in the DNA strand. Cleaves the DNA backbone by beta-delta elimination to generate a single-strand break at the site of the removed base with both 3'- and 5'-phosphates. The protein is Formamidopyrimidine-DNA glycosylase of Rickettsia massiliae (strain Mtu5).